A 119-amino-acid polypeptide reads, in one-letter code: Ribonuclease P protein component (119 aa).

The protein belongs to the RnpA family. In terms of assembly, consists of a catalytic RNA component (M1 or rnpB) and a protein subunit.

It catalyses the reaction Endonucleolytic cleavage of RNA, removing 5'-extranucleotides from tRNA precursor.. RNaseP catalyzes the removal of the 5'-leader sequence from pre-tRNA to produce the mature 5'-terminus. It can also cleave other RNA substrates such as 4.5S RNA. The protein component plays an auxiliary but essential role in vivo by binding to the 5'-leader sequence and broadening the substrate specificity of the ribozyme. The chain is Ribonuclease P protein component from Bifidobacterium longum (strain DJO10A).